A 734-amino-acid chain; its full sequence is Photosystem I P700 chlorophyll a apoprotein A2 (734 aa).

The next 8 helical transmembrane spans lie at 46–69 (IFAS…FHVA), 135–158 (LYIG…LHLQ), 175–199 (LNHH…HVAI), 273–291 (MAHH…GHMY), 330–353 (LHFQ…QHMY), 369–395 (AALY…IFFI), 417–439 (AIIS…LYVH), and 517–535 (FLVH…LILV). [4Fe-4S] cluster is bound by residues Cys-559 and Cys-568. The next 2 membrane-spanning stretches (helical) occupy residues 575–596 (AFYL…YWHW) and 643–665 (LSVW…MFLI). Residues His-654, Met-662, and Tyr-670 each coordinate chlorophyll a. Trp-671 contacts phylloquinone. A helical transmembrane segment spans residues 707-727 (LVGLAHFSVGYIFTYAAFLIA).

Belongs to the PsaA/PsaB family. As to quaternary structure, the PsaA/B heterodimer binds the P700 chlorophyll special pair and subsequent electron acceptors. PSI consists of a core antenna complex that captures photons, and an electron transfer chain that converts photonic excitation into a charge separation. The eukaryotic PSI reaction center is composed of at least 11 subunits. P700 is a chlorophyll a/chlorophyll a' dimer, A0 is one or more chlorophyll a, A1 is one or both phylloquinones and FX is a shared 4Fe-4S iron-sulfur center. is required as a cofactor.

The protein resides in the plastid. It is found in the chloroplast thylakoid membrane. The catalysed reaction is reduced [plastocyanin] + hnu + oxidized [2Fe-2S]-[ferredoxin] = oxidized [plastocyanin] + reduced [2Fe-2S]-[ferredoxin]. In terms of biological role, psaA and PsaB bind P700, the primary electron donor of photosystem I (PSI), as well as the electron acceptors A0, A1 and FX. PSI is a plastocyanin-ferredoxin oxidoreductase, converting photonic excitation into a charge separation, which transfers an electron from the donor P700 chlorophyll pair to the spectroscopically characterized acceptors A0, A1, FX, FA and FB in turn. Oxidized P700 is reduced on the lumenal side of the thylakoid membrane by plastocyanin. The polypeptide is Photosystem I P700 chlorophyll a apoprotein A2 (Populus alba (White poplar)).